A 141-amino-acid polypeptide reads, in one-letter code: Nucleoside triphosphatase NudI (141 aa).

The Nudix hydrolase domain occupies 1 to 141 (MRQRTIVCPL…RHTLRLKGLL (141 aa)). Positions 38-59 (GGVEPGERIEEALRREIREELG) match the Nudix box motif.

It belongs to the Nudix hydrolase family. NudI subfamily. Monomer. The cofactor is Mg(2+).

The catalysed reaction is a ribonucleoside 5'-triphosphate + H2O = a ribonucleoside 5'-phosphate + diphosphate + H(+). It carries out the reaction a 2'-deoxyribonucleoside 5'-triphosphate + H2O = a 2'-deoxyribonucleoside 5'-phosphate + diphosphate + H(+). It catalyses the reaction dUTP + H2O = dUMP + diphosphate + H(+). The enzyme catalyses dTTP + H2O = dTMP + diphosphate + H(+). The catalysed reaction is dCTP + H2O = dCMP + diphosphate + H(+). Catalyzes the hydrolysis of nucleoside triphosphates, with a preference for pyrimidine deoxynucleoside triphosphates (dUTP, dTTP and dCTP). The chain is Nucleoside triphosphatase NudI from Salmonella arizonae (strain ATCC BAA-731 / CDC346-86 / RSK2980).